We begin with the raw amino-acid sequence, 663 residues long: Protein pat-12 (663 aa).

Over residues 1 to 15 (MTSHIATETSVNRWS) the composition is skewed to polar residues. Disordered regions lie at residues 1–78 (MTSH…SGDY), 367–430 (RFEE…GQET), 517–546 (FRRGSQQQVSPFVEFPPTLPRRGGGGDYRR), and 597–663 (PMPA…RRRR). Positions 367 to 380 (RFEETRRTEEVERR) are enriched in basic and acidic residues. The segment covering 381 to 400 (VQRREKKERRSRHHSSSRHH) has biased composition (basic residues). A compositionally biased stretch (polar residues) spans 517–526 (FRRGSQQQVS). 2 stretches are compositionally biased toward basic and acidic residues: residues 620-640 (FNKERHANSGRRSGRDGKPVD) and 649-663 (NYKREQTLNDDRRRR).

In terms of assembly, interacts with vab-10 (via plankin domain). In terms of tissue distribution, isoform a: Expressed in the uterus, the vulva, the rectum, mechanosensory neurons and in head and tail neurons. Isoform e: Expressed in spermatheca and weakly in the vulva. Isoform f: Expressed in spermatheca and weakly in the vulva. Isoform i: Expressed in spermatheca and weakly in the vulva.

It is found in the apical cell membrane. It localises to the basal cell membrane. The protein localises to the cytoplasm. Its subcellular location is the cell junction. The protein resides in the hemidesmosome. It is found in the cell membrane. It localises to the cytoskeleton. Required for embryonic morphology and development. Plays both a functional and a structural role in the maintenance and probably biogenesis of fibrous organelles, a hemidesomosome-like junction structure, which ensures muscle stability and muscle connection to the external cuticle. The polypeptide is Protein pat-12 (Caenorhabditis elegans).